Consider the following 96-residue polypeptide: Co-chaperonin GroES (96 aa).

It belongs to the GroES chaperonin family. In terms of assembly, heptamer of 7 subunits arranged in a ring. Interacts with the chaperonin GroEL.

Its subcellular location is the cytoplasm. In terms of biological role, together with the chaperonin GroEL, plays an essential role in assisting protein folding. The GroEL-GroES system forms a nano-cage that allows encapsulation of the non-native substrate proteins and provides a physical environment optimized to promote and accelerate protein folding. GroES binds to the apical surface of the GroEL ring, thereby capping the opening of the GroEL channel. This chain is Co-chaperonin GroES, found in Caulobacter vibrioides (strain ATCC 19089 / CIP 103742 / CB 15) (Caulobacter crescentus).